Reading from the N-terminus, the 604-residue chain is Glucose-methanol-choline family oxidoreductase mfmG (604 aa).

An N-terminal signal peptide occupies residues 1–24 (MYMLRPSSLLLATGLLNQGSSVLA). N-linked (GlcNAc...) asparagine glycosylation occurs at Asn32. FAD contacts are provided by residues 44-45 (TA) and 65-66 (EA). Asn76 and Asn97 each carry an N-linked (GlcNAc...) asparagine glycan. 126-129 (NFMA) serves as a coordination point for FAD. Residues Asn260, Asn265, Asn401, and Asn460 are each glycosylated (N-linked (GlcNAc...) asparagine). His538 acts as the Proton acceptor in catalysis. Residues Ala572 and 584–585 (PQ) each bind FAD.

It belongs to the GMC oxidoreductase family. In terms of assembly, homodimer. Requires FAD as cofactor.

Functionally, oxidoreductase; part of the gene cluster that mediates the biosynthesis of the phthalide-terpenoid hybrid 11'-O-desmethylfendlerol. MfmG seems not to be involved directly in the biosynthesis of 11'-O-desmethylfendlerol and its role has still to be determined. The biosynthesis of 11'-O-desmethylfendlerol begins with the NR-PKS mfmB that forms 3,5-dimethylorsellinic acid (DMOA), which is then transformed into the phthalide 5,7-dihydroxy-4-(hydroxymethyl)-6-methylphthalide by the cytochrome P450 monooxygenase mfmA and the hydrolase mfmC. Subsequently, the methyltransferase mfmE catalyzes 7-O-methylation to yield 5-hydroxy-4-(hydroxymethyl)-7-methoxy-6-methylphthalide, which undergoes C-3 hydroxylation by the cytochrome P450 monooxygenase mfmF. The resultant cyclopolic acid (2,5-dihydroxy-4-(hydroxymethyl)-7-methoxy-6-methylphthalide) is then farnesylated by the DMATS-type prenyltransferase mfmD to afford 5-O-farnesylcyclopolic acid. Finally, the Pyr4-family terpene cyclase mfmH cyclizes the farnesyl moiety of 5-O-farnesylcyclopolic acid into a drimane-like structure, thus completing the biosynthesis of 11'-O-desmethylfendlerol. This chain is Glucose-methanol-choline family oxidoreductase mfmG, found in Annulohypoxylon moriforme (Filamentous fungus).